Here is a 118-residue protein sequence, read N- to C-terminus: Vitelline coat lysin (118 aa).

The sequence is that of Vitelline coat lysin from Tegula pfeifferi (Pfeiffer's top shell).